A 419-amino-acid polypeptide reads, in one-letter code: Gamma-glutamyl phosphate reductase (419 aa).

This sequence belongs to the gamma-glutamyl phosphate reductase family.

It is found in the cytoplasm. The catalysed reaction is L-glutamate 5-semialdehyde + phosphate + NADP(+) = L-glutamyl 5-phosphate + NADPH + H(+). It participates in amino-acid biosynthesis; L-proline biosynthesis; L-glutamate 5-semialdehyde from L-glutamate: step 2/2. Its function is as follows. Catalyzes the NADPH-dependent reduction of L-glutamate 5-phosphate into L-glutamate 5-semialdehyde and phosphate. The product spontaneously undergoes cyclization to form 1-pyrroline-5-carboxylate. This is Gamma-glutamyl phosphate reductase from Caulobacter sp. (strain K31).